Here is a 141-residue protein sequence, read N- to C-terminus: Drosulfakinins (141 aa).

Positions 1–31 (MGLRRCTHFATLVMPLWALALFFLVVMQVPA) are cleaved as a signal peptide. The propeptide occupies 32 to 73 (QTTSLQISKEDRRLQELESKMGAESEQPNANLVGPSISRFGD). The segment at 49–69 (ESKMGAESEQPNANLVGPSIS) is disordered. Phe-82 is modified (phenylalanine amide). Residues 86 to 111 (VPLISRPMIPIELDLLMDNDDERTKA) constitute a propeptide that is removed on maturation. At Tyr-117 the chain carries Sulfotyrosine. Position 122 is a phenylalanine amide (Phe-122). Tyr-134 is subject to Sulfotyrosine. A Phenylalanine amide modification is found at Phe-139.

The protein belongs to the gastrin/cholecystokinin family.

It is found in the secreted. Drosulfakinin-0 (DSK 0) plays diverse biological roles including regulating gut muscle contraction in adults but not in larvae. This is Drosulfakinins from Drosophila erecta (Fruit fly).